The primary structure comprises 166 residues: Endoribonuclease YbeY (166 aa).

The Zn(2+) site is built by H131, H135, and H141.

This sequence belongs to the endoribonuclease YbeY family. The cofactor is Zn(2+).

It is found in the cytoplasm. Its function is as follows. Single strand-specific metallo-endoribonuclease involved in late-stage 70S ribosome quality control and in maturation of the 3' terminus of the 16S rRNA. In Dehalococcoides mccartyi (strain CBDB1), this protein is Endoribonuclease YbeY.